The sequence spans 160 residues: Cyclic pyranopterin monophosphate synthase (160 aa).

Substrate is bound by residues 73 to 75 and 110 to 111; these read LCH and ME. Residue D125 is part of the active site.

This sequence belongs to the MoaC family. Homohexamer; trimer of dimers.

It carries out the reaction (8S)-3',8-cyclo-7,8-dihydroguanosine 5'-triphosphate = cyclic pyranopterin phosphate + diphosphate. The protein operates within cofactor biosynthesis; molybdopterin biosynthesis. In terms of biological role, catalyzes the conversion of (8S)-3',8-cyclo-7,8-dihydroguanosine 5'-triphosphate to cyclic pyranopterin monophosphate (cPMP). In Pseudomonas paraeruginosa (strain DSM 24068 / PA7) (Pseudomonas aeruginosa (strain PA7)), this protein is Cyclic pyranopterin monophosphate synthase.